We begin with the raw amino-acid sequence, 61 residues long: Double gene block protein 1 (61 aa).

Residues 15–45 are disordered; sequence LAGNRGKQKTRRSVAKDAIRKPASDSTNGGN. The RNA-binding stretch occupies residues 17-35; the sequence is GNRGKQKTRRSVAKDAIRK. Basic and acidic residues predominate over residues 28–37; it reads VAKDAIRKPA.

The protein belongs to the carmovirus double gene block protein 1 family. Homodimer.

Its function is as follows. Cell-to-cell movement. Displays RNA-binding activity. This chain is Double gene block protein 1, found in Carnation mottle virus (isolate China/Shanghai) (CarMV).